The sequence spans 244 residues: Nicotinamidase 1 (244 aa).

Belongs to the isochorismatase family. In terms of tissue distribution, expressed in roots and stems, and at lower levels in flowers, siliques and leaves.

The catalysed reaction is nicotinamide + H2O = nicotinate + NH4(+). It participates in cofactor biosynthesis; nicotinate biosynthesis; nicotinate from nicotinamide: step 1/1. Its function is as follows. Catalyzes the deamidation of nicotinamide, an early step in the NAD(+) salvage pathway. Prevents the accumulation of intracellular nicotinamide, a known inhibitor of poly(ADP-ribose) polymerases (PARP enzymes). The protein is Nicotinamidase 1 of Arabidopsis thaliana (Mouse-ear cress).